The following is a 229-amino-acid chain: Ribonuclease HII (229 aa).

An RNase H type-2 domain is found at 34–225 (GPVAGVDEAG…VKAAHDQWLQ (192 aa)). A divalent metal cation-binding residues include D40, E41, and D134.

Belongs to the RNase HII family. It depends on Mn(2+) as a cofactor. Mg(2+) serves as cofactor.

The protein localises to the cytoplasm. It carries out the reaction Endonucleolytic cleavage to 5'-phosphomonoester.. Its function is as follows. Endonuclease that specifically degrades the RNA of RNA-DNA hybrids. This chain is Ribonuclease HII, found in Corynebacterium diphtheriae (strain ATCC 700971 / NCTC 13129 / Biotype gravis).